A 292-amino-acid chain; its full sequence is 4-hydroxy-tetrahydrodipicolinate synthase (292 aa).

Threonine 45 contacts pyruvate. Tyrosine 133 serves as the catalytic Proton donor/acceptor. The Schiff-base intermediate with substrate role is filled by lysine 162. Pyruvate is bound at residue isoleucine 204.

It belongs to the DapA family. In terms of assembly, homotetramer; dimer of dimers.

The protein resides in the cytoplasm. It catalyses the reaction L-aspartate 4-semialdehyde + pyruvate = (2S,4S)-4-hydroxy-2,3,4,5-tetrahydrodipicolinate + H2O + H(+). It functions in the pathway amino-acid biosynthesis; L-lysine biosynthesis via DAP pathway; (S)-tetrahydrodipicolinate from L-aspartate: step 3/4. In terms of biological role, catalyzes the condensation of (S)-aspartate-beta-semialdehyde [(S)-ASA] and pyruvate to 4-hydroxy-tetrahydrodipicolinate (HTPA). The chain is 4-hydroxy-tetrahydrodipicolinate synthase from Nitratidesulfovibrio vulgaris (strain ATCC 29579 / DSM 644 / CCUG 34227 / NCIMB 8303 / VKM B-1760 / Hildenborough) (Desulfovibrio vulgaris).